We begin with the raw amino-acid sequence, 339 residues long: NADH-quinone oxidoreductase subunit H (339 aa).

9 helical membrane passes run 9 to 29 (IFPLIIIALKVVAITTPLILC), 50 to 70 (PNVVGPFGLLQPIADAVKLLF), 82 to 102 (ILFILAPMITFILSLIGWAVI), 115 to 135 (VGVLYILAISSLSVYGIIIAG), 161 to 181 (MGLVIITVLLTTGTLNLSEII), 187 to 207 (MPWWIDLMLLPMGVVFFISVL), 235 to 255 (MGFALFFLGEYANMILVSAMT), 275 to 295 (IPGFFWFVFKVGFLLFCFLWI), and 311 to 331 (GWKVFLPLTLFWVVLVSSVLV).

Belongs to the complex I subunit 1 family. In terms of assembly, NDH-1 is composed of 14 different subunits. Subunits NuoA, H, J, K, L, M, N constitute the membrane sector of the complex.

The protein localises to the cell inner membrane. It carries out the reaction a quinone + NADH + 5 H(+)(in) = a quinol + NAD(+) + 4 H(+)(out). Its function is as follows. NDH-1 shuttles electrons from NADH, via FMN and iron-sulfur (Fe-S) centers, to quinones in the respiratory chain. The immediate electron acceptor for the enzyme in this species is believed to be ubiquinone. Couples the redox reaction to proton translocation (for every two electrons transferred, four hydrogen ions are translocated across the cytoplasmic membrane), and thus conserves the redox energy in a proton gradient. This subunit may bind ubiquinone. This is NADH-quinone oxidoreductase subunit H from Rickettsia peacockii (strain Rustic).